A 404-amino-acid chain; its full sequence is MKRIRDLWVRTNLIKKIGIGVVIGLLLGILLPDVTAIGILGQLFVGALKAIAPLLVFALVVQAISHQRSGQQTNITLIIVLYLLGTFLAALVAVIANYLFPLTLTLNTPVNTELSPPQGIVQVFQTLLLKLVDNPINALATANYIGVLAWALIFGLALKSVPSDFKHLIKTAADVTSQIVVWIINVAPIGIMGLVFSTVSENGISILSDYALLILVLVGTMLFVALVVNPLLAFALTHQNPYPLVFRCLKDSGLTAFFTRSSAANIPVNLQLCEDLGLSQATYLVSIPLGAMINMGGAAITINVLTLAAVNTFGIQIDFLTALLLSVVAAISACGASGVTGGSLLLIPVACSLFGISSDLAMQVVGVGFIVGVIQDSCETALNSSTDVLFTAIAENAFWKQKKA.

The next 9 membrane-spanning stretches (helical) occupy residues 17–37, 44–64, 75–95, 138–158, 179–199, 212–232, 287–307, 319–339, and 354–374; these read IGIG…VTAI, FVGA…VQAI, ITLI…VAVI, ALAT…GLAL, IVVW…FSTV, LLIL…NPLL, IPLG…VLTL, FLTA…ASGV, and FGIS…VGVI.

This sequence belongs to the dicarboxylate/amino acid:cation symporter (DAACS) (TC 2.A.23) family.

The protein resides in the cell membrane. It catalyses the reaction L-serine(in) + Na(+)(in) = L-serine(out) + Na(+)(out). The catalysed reaction is L-threonine(in) + Na(+)(in) = L-threonine(out) + Na(+)(out). In terms of biological role, involved in the import of serine and threonine into the cell, with the concomitant import of sodium (symport system). This chain is Serine/threonine transporter SstT, found in Streptococcus equi subsp. zooepidemicus (strain MGCS10565).